Here is a 179-residue protein sequence, read N- to C-terminus: ATP synthase subunit delta, chloroplastic (179 aa).

It belongs to the ATPase delta chain family. F-type ATPases have 2 components, F(1) - the catalytic core - and F(0) - the membrane proton channel. F(1) has five subunits: alpha(3), beta(3), gamma(1), delta(1), epsilon(1). CF(0) has four main subunits: a(1), b(1), b'(1) and c(10-14). The alpha and beta chains form an alternating ring which encloses part of the gamma chain. F(1) is attached to F(0) by a central stalk formed by the gamma and epsilon chains, while a peripheral stalk is formed by the delta, b and b' chains.

The protein localises to the plastid. It localises to the chloroplast thylakoid membrane. Its function is as follows. F(1)F(0) ATP synthase produces ATP from ADP in the presence of a proton or sodium gradient. F-type ATPases consist of two structural domains, F(1) containing the extramembraneous catalytic core and F(0) containing the membrane proton channel, linked together by a central stalk and a peripheral stalk. During catalysis, ATP synthesis in the catalytic domain of F(1) is coupled via a rotary mechanism of the central stalk subunits to proton translocation. In terms of biological role, this protein is part of the stalk that links CF(0) to CF(1). It either transmits conformational changes from CF(0) to CF(1) or is implicated in proton conduction. This is ATP synthase subunit delta, chloroplastic from Ochrosphaera neapolitana.